Consider the following 90-residue polypeptide: Acylphosphatase (90 aa).

The region spanning 5-90 (SFVVHVWGQV…PPQKGGFHTN (86 aa)) is the Acylphosphatase-like domain. Residues Arg20 and Asn38 contribute to the active site.

The protein belongs to the acylphosphatase family.

The enzyme catalyses an acyl phosphate + H2O = a carboxylate + phosphate + H(+). The polypeptide is Acylphosphatase (acyP) (Aeromonas salmonicida (strain A449)).